A 144-amino-acid chain; its full sequence is Putative sugar phosphate isomerase RT0290 (144 aa).

Residue H12 coordinates substrate. Catalysis depends on H101, which acts as the Proton donor. R135 serves as a coordination point for substrate.

It belongs to the LacAB/RpiB family.

The chain is Putative sugar phosphate isomerase RT0290 from Rickettsia typhi (strain ATCC VR-144 / Wilmington).